A 257-amino-acid chain; its full sequence is Ribonuclease HII (257 aa).

Residues 72-257 (TYIAGIDEVG…FAPIKDMIQK (186 aa)) enclose the RNase H type-2 domain. Positions 78, 79, and 170 each coordinate a divalent metal cation.

Belongs to the RNase HII family. Mn(2+) serves as cofactor. Mg(2+) is required as a cofactor.

The protein resides in the cytoplasm. The catalysed reaction is Endonucleolytic cleavage to 5'-phosphomonoester.. Functionally, endonuclease that specifically degrades the RNA of RNA-DNA hybrids. The protein is Ribonuclease HII of Bacillus mycoides (strain KBAB4) (Bacillus weihenstephanensis).